The primary structure comprises 154 residues: S-protein homolog 12 (154 aa).

The N-terminal stretch at 1–30 is a signal peptide; it reads MGTNKIPKTLNGNLVLILIITIMMVTHSHG.

Belongs to the plant self-incompatibility (S1) protein family.

The protein resides in the secreted. The protein is S-protein homolog 12 of Arabidopsis thaliana (Mouse-ear cress).